A 570-amino-acid polypeptide reads, in one-letter code: Multidrug and toxin extrusion protein 1 (570 aa).

Position 1 is an N-acetylmethionine (M1). The Cytoplasmic portion of the chain corresponds to 1–37 (MEAPEEPAPVRGGPEATLEIHGSRFLRLSAFREELRA). The chain crosses the membrane as a helical span at residues 38–58 (LLVLAGPAFLVQLMVFLISFI). Over 59–72 (SSVFCGHLGKLELD) the chain is Extracellular. Residues 73 to 93 (AVTLAIAVINVTGVSVGFGLS) form a helical membrane-spanning segment. The Cytoplasmic segment spans residues 94 to 120 (SACDTLISQTYGSQNLKHVGVILQRSA). A helical transmembrane segment spans residues 121–141 (LILLLCCFPCWALFLNTQHIL). The Extracellular portion of the chain corresponds to 142–152 (LLFRQDPDVSR). A helical transmembrane segment spans residues 153-173 (LTQTYVTIFIPALPATFLYML). The Cytoplasmic portion of the chain corresponds to 174-176 (QVK). A helical transmembrane segment spans residues 177-197 (YLLNQGIVLPQIVTGVAANLV). Over 198–216 (NALANYLFLHQLHLGAIGS) the chain is Extracellular. The helical transmembrane segment at 217–237 (ALANLISQYTLALLLFFYILG) threads the bilayer. Topologically, residues 238-251 (KKLHQATWGGWSLE) are cytoplasmic. A helical transmembrane segment spans residues 252–272 (CLQDWASFLHLAVPSMLMLCM). Over 273–295 (EWWAYEVGSFLSGILGMVELGAQ) the chain is Extracellular. Residues 296-316 (SIVYELAIIVYMVPAGFSVAA) form a helical membrane-spanning segment. At 317 to 336 (SVRVGNALGAGDMEQARKSS) the chain is on the cytoplasmic side. A helical membrane pass occupies residues 337–357 (TVSLLITVLFAVAFSVLLLSC). The Extracellular segment spans residues 358 to 370 (KDHVGYIFTTDRD). A helical membrane pass occupies residues 371–391 (IINLVAQVVPIYAVSHLFEAL). The Cytoplasmic segment spans residues 392 to 408 (ACTSGGVLRGSGNQKVG). Residues 409–429 (AIVNTIGYYVVGLPIGIALMF) traverse the membrane as a helical segment. The Extracellular segment spans residues 430-437 (ATKLGVMG). A helical membrane pass occupies residues 438–458 (LWSGIIICTVFQAVCFLGFII). Residues 459-546 (QLNWKKACQQ…LSRKQLVLRR (88 aa)) are Cytoplasmic-facing. Residues 508 to 534 (DVGKTGETQSDQQMRQEEPLPEHPQDS) are disordered. Residues 521 to 533 (MRQEEPLPEHPQD) are compositionally biased toward basic and acidic residues. A helical transmembrane segment spans residues 547 to 567 (GLLLLGVFLILLVGILVRFYV). The Extracellular portion of the chain corresponds to 568–570 (RIQ).

It belongs to the multi antimicrobial extrusion (MATE) (TC 2.A.66.1) family.

It is found in the cell membrane. It localises to the apical cell membrane. The enzyme catalyses thiamine(out) + H(+)(in) = thiamine(in) + H(+)(out). The catalysed reaction is estrone 3-sulfate(in) + H(+)(out) = estrone 3-sulfate(out) + H(+)(in). It catalyses the reaction creatinine(in) + H(+)(out) = creatinine(out) + H(+)(in). It carries out the reaction agmatine(in) + H(+)(out) = agmatine(out) + H(+)(in). Functionally, multidrug efflux pump that functions as a H(+)/organic cation antiporter. Plays a physiological role in the excretion of cationic compounds including endogenous metabolites, drugs, toxins through the kidney and liver, into urine and bile respectively. Mediates the efflux of endogenous compounds such as creatinine, vitamin B1/thiamine, agmatine and estrone-3-sulfate. May also contribute to regulate the transport of cationic compounds in testis across the blood-testis-barrier. The sequence is that of Multidrug and toxin extrusion protein 1 (SLC47A1) from Pongo abelii (Sumatran orangutan).